The chain runs to 293 residues: Elongation factor Ts (293 aa).

Positions 80 to 83 (TDFV) are involved in Mg(2+) ion dislocation from EF-Tu.

This sequence belongs to the EF-Ts family.

It is found in the cytoplasm. Functionally, associates with the EF-Tu.GDP complex and induces the exchange of GDP to GTP. It remains bound to the aminoacyl-tRNA.EF-Tu.GTP complex up to the GTP hydrolysis stage on the ribosome. This chain is Elongation factor Ts, found in Enterococcus faecalis (strain ATCC 700802 / V583).